Consider the following 262-residue polypeptide: Snake venom serine proteinase 1 (262 aa).

A signal peptide spans 1-18 (MVLIRVLANLLILQLSYA). Residues 19 to 24 (QKSSEL) constitute a propeptide that is removed on maturation. The region spanning 25–253 (VIGGDECNIN…HLDWIQSIIA (229 aa)) is the Peptidase S1 domain. 5 disulfide bridges follow: C31–C165, C52–C68, C144–C214, C176–C193, and C204–C229. Catalysis depends on H67, which acts as the Charge relay system. N105 carries N-linked (GlcNAc...) asparagine glycosylation. D112 acts as the Charge relay system in catalysis. The Charge relay system role is filled by S208.

The protein belongs to the peptidase S1 family. Snake venom subfamily. Monomer. Expressed by the venom gland.

The protein localises to the secreted. Functionally, snake venom serine protease that may act in the hemostasis system of the prey. In Crotalus adamanteus (Eastern diamondback rattlesnake), this protein is Snake venom serine proteinase 1.